The chain runs to 174 residues: Crossover junction endodeoxyribonuclease RuvC (174 aa).

Catalysis depends on residues D8, E69, and D141. The Mg(2+) site is built by D8, E69, and D141.

This sequence belongs to the RuvC family. In terms of assembly, homodimer which binds Holliday junction (HJ) DNA. The HJ becomes 2-fold symmetrical on binding to RuvC with unstacked arms; it has a different conformation from HJ DNA in complex with RuvA. In the full resolvosome a probable DNA-RuvA(4)-RuvB(12)-RuvC(2) complex forms which resolves the HJ. Mg(2+) serves as cofactor.

It localises to the cytoplasm. It carries out the reaction Endonucleolytic cleavage at a junction such as a reciprocal single-stranded crossover between two homologous DNA duplexes (Holliday junction).. Its function is as follows. The RuvA-RuvB-RuvC complex processes Holliday junction (HJ) DNA during genetic recombination and DNA repair. Endonuclease that resolves HJ intermediates. Cleaves cruciform DNA by making single-stranded nicks across the HJ at symmetrical positions within the homologous arms, yielding a 5'-phosphate and a 3'-hydroxyl group; requires a central core of homology in the junction. The consensus cleavage sequence is 5'-(A/T)TT(C/G)-3'. Cleavage occurs on the 3'-side of the TT dinucleotide at the point of strand exchange. HJ branch migration catalyzed by RuvA-RuvB allows RuvC to scan DNA until it finds its consensus sequence, where it cleaves and resolves the cruciform DNA. The protein is Crossover junction endodeoxyribonuclease RuvC of Xanthomonas campestris pv. campestris (strain 8004).